Here is a 1506-residue protein sequence, read N- to C-terminus: Transient receptor potential cation channel subfamily M member 2 (1506 aa).

Residues 1–11 (MESLDRRRTGS) show a composition bias toward basic and acidic residues. Residues 1–22 (MESLDRRRTGSEQEEGFGVQSR) form a disordered region. Over 1-750 (MESLDRRRTG…WWGQLCVDNG (750 aa)) the chain is Cytoplasmic. Thr173, Asn178, Arg301, Gly332, and Thr335 together coordinate ADP-D-ribose. Thr738 carries the phosphothreonine modification. An intramembrane segment occupies 751 to 767 (LWRIILCMLAFPLLFTG). Topologically, residues 768–792 (FISFREKRLQALCRPARVRAFFNAP) are cytoplasmic. A helical membrane pass occupies residues 793–813 (VVIFHMNILSYFAFLCLFAYV). Over 814 to 824 (LMVDFQPSPSW) the chain is Extracellular. The chain crosses the membrane as a helical span at residues 825-845 (CEYLIYLWLFSLVCEETRQLF). Residues Glu840 and Gln843 each contribute to the Ca(2+) site. At 846-864 (YDPDGCGLMKMASLYFSDF) the chain is on the cytoplasmic side. The chain crosses the membrane as a helical span at residues 865–885 (WNKLDVGAILLFIVGLTCRLI). Position 866 (Asn866) interacts with Ca(2+). Residues 886–893 (PATLYPGR) lie on the Extracellular side of the membrane. The helical transmembrane segment at 894–914 (IILSLDFIMFCLRLMHIFTIS) threads the bilayer. Residues 915–926 (KTLGPKIIIVKR) lie on the Cytoplasmic side of the membrane. The chain crosses the membrane as a helical span at residues 927 to 947 (MMKDVFFFLFLLAVWVVSFGV). The Extracellular portion of the chain corresponds to 948-967 (AKQAILIHNESRVDWIFRGV). Residues 968–982 (VYHSYLTIFGQIPTY) constitute an intramembrane region (pore-forming). The Selectivity filter signature appears at 976 to 979 (FGQI). Residues 983–1019 (IDGVNFSMDQCSPNGTDPYKPKCPESDWTGQAPAFPE) are Extracellular-facing. A disulfide bridge connects residues Cys993 and Cys1005. Residues 1020 to 1041 (WLTVTLLCLYLLFANILLLNLL) traverse the membrane as a helical segment. Residues 1042 to 1076 (IAMFNYTFQEVQEHTDQIWKFQRHDLIEEYHGRPP) are Cytoplasmic-facing. Ca(2+) is bound at residue Glu1070. Residues 1077–1095 (APPPLILLSHLQLLIKRIV) lie within the membrane without spanning it. The Cytoplasmic segment spans residues 1096–1506 (LKIPAKRHKQ…KVASLFGAHF (411 aa)). The Nudix hydrolase domain occupies 1350–1501 (RWKRNQGGAI…KTILQKVASL (152 aa)). Ser1378 contributes to the ADP-D-ribose binding site. The Nudix box motif lies at 1386 to 1407 (GSREPGEMLPRKLKRVLRQEFW). ADP-D-ribose is bound by residues Asp1427, Arg1429, Tyr1488, and Asn1490.

The protein belongs to the transient receptor (TC 1.A.4) family. LTrpC subfamily. TRPM2 sub-subfamily. In terms of assembly, homotetramer. In terms of processing, protein kinase C (PKC)-mediated phosphorylation of TRPM2 at Thr-738 counteracts the effect of cytosolic Ca(2+) and elevates the temperature threshold. Detected in the preoptic area of the hypothalamus, a brain area involved in body temperature control. Detected in beta-cells in pancreas islets (at protein level). Detected in brain cortex, striatum, hippocampus CA1, CA2 and CA3 layers, and in the Purkinje cell layer in cerebellum. Widely expressed, with highest levels in lung, spleen, eye and brain. Detected in dendritic cells and in polymorphonuclear neutrophils.

It is found in the cell membrane. The protein localises to the perikaryon. It localises to the cell projection. Its subcellular location is the cytoplasmic vesicle. The protein resides in the lysosome. The catalysed reaction is Ca(2+)(in) = Ca(2+)(out). It carries out the reaction Na(+)(in) = Na(+)(out). With respect to regulation, activated by intracellular ADP-ribose, beta-NAD (NAD(+)) and similar compounds, and by oxidative stress caused by reactive oxygen or nitrogen species. Ca(2+) and PI(4,5)P2 are required for channel opening by ADP-ribose. Activated by moderate heat (35 to 40 degrees Celsius). Activation by ADP-ribose and beta-NAD is strongly increased by moderate heat (35 to 40 degrees Celsius). Likewise, reactive oxygen species lower the threshold for activation by moderate heat (37 degrees Celsius). Inactivated by exposure to extracellular pH between 4.0 and 6.5; irreversibly inactivated when open channels are exposed to extracellular pH between 4.0 and 6.5, while pre-exposure of closed channels to extracellular pH 5.5 gives rise to currents that rapidly inactivate, but protects against irreversible inactivation. Inactivated by intracellular ATP. Activated by arachidonic acid. Inhibited by 2-aminoethyl diphenylborinate (2-APB). Functionally, nonselective, voltage-independent cation channel that mediates Na(+) and Ca(2+) influx, leading to increased cytoplasmic Ca(2+) levels. Functions as a ligand-gated ion channel, gated by intracellular adenosine diphosphate ribose (ADP-ribose), Ca(2+), warm temperature, and oxidative stress. The precise physiological activators are under debate; the true, physiological activators may be ADP-ribose and ADP-ribose-2'-phosphate. Binding of ADP-ribose to the cytoplasmic Nudix domain causes a conformation change; the channel is primed but still requires Ca(2+) binding to trigger channel opening. Extracellular Ca(2+) passes through the channel and increases channel activity. Also contributes to Ca(2+) release from intracellular stores in response to ADP-ribose. Plays a role in numerous processes that involve signaling via intracellular Ca(2+) levels. Besides, mediates the release of lysosomal Zn(2+) stores in response to reactive oxygen species, leading to increased cytosolic Zn(2+) levels. Plays a role in mediating behavorial and physiological responses to moderate heat and thereby contributes to body temperature homeostasis. Plays a role in insulin secretion, a process that requires increased cytoplasmic Ca(2+) levels. Required for normal IFNG and cytokine secretion and normal innate immune immunity in response to bacterial infection. Required for normal phagocytosis and cytokine release by macrophages exposed to zymosan (in vitro). Plays a role in dendritic cell differentiation and maturation, and in dendritic cell chemotaxis via its role in regulating cytoplasmic Ca(2+) levels. Plays a role in the regulation of the reorganization of the actin cytoskeleton and filopodia formation in response to reactive oxygen species via its function in increasing cytoplasmic Ca(2+) and Zn(2+) levels. Confers susceptibility to cell death following oxidative stress. The polypeptide is Transient receptor potential cation channel subfamily M member 2 (Trpm2) (Mus musculus (Mouse)).